Here is a 464-residue protein sequence, read N- to C-terminus: Delta(5) fatty acid desaturase A (464 aa).

The 78-residue stretch at 13–90 (GKQYSWSELA…LKNYEIGYIS (78 aa)) folds into the Cytochrome b5 heme-binding domain. The heme site is built by histidine 48 and histidine 71. Transmembrane regions (helical) follow at residues 125 to 145 (AVSIFSRLALVYLLVFVTYYL) and 153 to 173 (FYLNCFLAIVYALCNSLFSMH). The short motif at 176–180 (HDSCH) is the Histidine box-1 element. The Histidine box-2 signature appears at 212–217 (HVIGHH). Residues 318 to 338 (FTDLICYFLIAEFVFGWYLTI) traverse the membrane as a helical segment. Residues 396–400 (QVVHH) carry the Histidine box-3 motif.

This sequence belongs to the fatty acid desaturase type 1 family. Fe cation is required as a cofactor.

The protein localises to the membrane. Its function is as follows. Specific for desaturation of the 5 position in C16 and C18 fatty acids. This is Delta(5) fatty acid desaturase A (fadA) from Dictyostelium discoideum (Social amoeba).